A 296-amino-acid polypeptide reads, in one-letter code: 33 kDa chaperonin (296 aa).

2 disulfide bridges follow: C238-C240 and C271-C274.

It belongs to the HSP33 family. In terms of processing, under oxidizing conditions two disulfide bonds are formed involving the reactive cysteines. Under reducing conditions zinc is bound to the reactive cysteines and the protein is inactive.

Its subcellular location is the cytoplasm. Redox regulated molecular chaperone. Protects both thermally unfolding and oxidatively damaged proteins from irreversible aggregation. Plays an important role in the bacterial defense system toward oxidative stress. The protein is 33 kDa chaperonin of Clostridium botulinum (strain ATCC 19397 / Type A).